The chain runs to 228 residues: LexA repressor (228 aa).

The H-T-H motif DNA-binding region spans 28-48 (IREIGEALDIRSTNGVNDHLK). Catalysis depends on for autocatalytic cleavage activity residues Ser-146 and Lys-183.

Belongs to the peptidase S24 family. In terms of assembly, homodimer.

The catalysed reaction is Hydrolysis of Ala-|-Gly bond in repressor LexA.. Represses a number of genes involved in the response to DNA damage (SOS response), including recA and lexA. In the presence of single-stranded DNA, RecA interacts with LexA causing an autocatalytic cleavage which disrupts the DNA-binding part of LexA, leading to derepression of the SOS regulon and eventually DNA repair. This is LexA repressor from Anaeromyxobacter dehalogenans (strain 2CP-1 / ATCC BAA-258).